Reading from the N-terminus, the 1546-residue chain is DNA-directed RNA polymerase subunit beta' (1546 aa).

Residues cysteine 57, cysteine 59, cysteine 72, and cysteine 75 each contribute to the Zn(2+) site. Mg(2+) is bound by residues aspartate 756, aspartate 758, and aspartate 760. Zn(2+)-binding residues include cysteine 1130, cysteine 1211, cysteine 1218, and cysteine 1221. A disordered region spans residues 1512-1546; that stretch reads LEKYGEGSTSSDAVTGGQRYDDTRPGSSINPGYGD. A compositionally biased stretch (polar residues) spans 1536-1546; it reads PGSSINPGYGD.

This sequence belongs to the RNA polymerase beta' chain family. As to quaternary structure, the RNAP catalytic core consists of 2 alpha, 1 beta, 1 beta' and 1 omega subunit. When a sigma factor is associated with the core the holoenzyme is formed, which can initiate transcription. The cofactor is Mg(2+). Zn(2+) serves as cofactor.

It carries out the reaction RNA(n) + a ribonucleoside 5'-triphosphate = RNA(n+1) + diphosphate. Functionally, DNA-dependent RNA polymerase catalyzes the transcription of DNA into RNA using the four ribonucleoside triphosphates as substrates. The polypeptide is DNA-directed RNA polymerase subunit beta' (Deinococcus radiodurans (strain ATCC 13939 / DSM 20539 / JCM 16871 / CCUG 27074 / LMG 4051 / NBRC 15346 / NCIMB 9279 / VKM B-1422 / R1)).